The following is a 175-amino-acid chain: Dual-action ribosomal maturation protein DarP (175 aa).

Belongs to the DarP family.

The protein localises to the cytoplasm. Member of a network of 50S ribosomal subunit biogenesis factors which assembles along the 30S-50S interface, preventing incorrect 23S rRNA structures from forming. Promotes peptidyl transferase center (PTC) maturation. This chain is Dual-action ribosomal maturation protein DarP, found in Vibrio parahaemolyticus serotype O3:K6 (strain RIMD 2210633).